A 327-amino-acid polypeptide reads, in one-letter code: MRVIFAGTPEFARVALERLLAAGFTVPLVLTQPDRPAGRGMKLQASPVKQCALEHGIAVAQPRSLRLDGKYPEEAAAARAAIEAAQADVMVVAAYGLILPQWVLDTPPRGCLNIHASLLPRWRGAAPIHRAIEAGDAETGVTIMQMDAGLDTGDMCLVERLPITADDTTASLHDKLADLGGRLIVEALEMSACGGLPRTPQPAEGVNYAHKIEKAESQIDWRQDAEAIARRLRAFNPFPGGATQYGDESIKVWEAHADPAIAVGTAAPGTVLSAGADGVRVACGNGVLCMTLLQRAGGKRLAAGDFLRGFDLPEGAVLDGAASGGTP.

117–120 (SLLP) provides a ligand contact to (6S)-5,6,7,8-tetrahydrofolate.

It belongs to the Fmt family.

The catalysed reaction is L-methionyl-tRNA(fMet) + (6R)-10-formyltetrahydrofolate = N-formyl-L-methionyl-tRNA(fMet) + (6S)-5,6,7,8-tetrahydrofolate + H(+). Attaches a formyl group to the free amino group of methionyl-tRNA(fMet). The formyl group appears to play a dual role in the initiator identity of N-formylmethionyl-tRNA by promoting its recognition by IF2 and preventing the misappropriation of this tRNA by the elongation apparatus. This Delftia acidovorans (strain DSM 14801 / SPH-1) protein is Methionyl-tRNA formyltransferase.